Reading from the N-terminus, the 252-residue chain is Maintenance of carboxysome distribution protein A (252 aa).

ATP-binding residues include G11, G12, G14, K15, T16, T17, Q41, E147, K151, F182, R183, L216, E217, and S218. Mg(2+) is bound at residue T16.

The protein belongs to the ParA family. McdA subfamily. As to quaternary structure, self-associates (probably a homodimer), interacts with McdB probably via the C-terminus of both proteins. Shows no signs of filament formation. Homodimerizes in the presence of ATP, making extra nucleotide contacts than with ADP or AMP-PNP. Each subunit binds 1 ATP molecule; Glu-147, Lys-151 and Arg-183 cross the dimer interface to contact ATP in the other subunit, while Phe-182, Arg-183 and Phe-221 stack with the adenine base in their own subunit.

It localises to the cytoplasm. Its subcellular location is the nucleoid. It carries out the reaction ATP + H2O = ADP + phosphate + H(+). In terms of biological role, mcdA and McdB together mediate carboxysome (Cb) spacing, size, ultrastructure and probably inheritance in the cell. Together they prevent Cb aggregation. McdA is an ATPase that forms dynamic gradients on the nucleoid in response to adapter protein McdB, which associates with carboxysomes. The interplay between McdA gradients on the nucleoid and McdB-bound carboxysomes result in the equal spacing of Cbs along the cell length. Binds nucleoid DNA in an ATP-dependent manner; neither ADP nor ATP-gamma-S support DNA binding. Upon ATP-binding dimerizes and binds nucleoid DNA; the (McdA-ATP)2 dimer transiently binds McdB-bound Cbs. McdA's ATPase activity is stimulated 2-fold by DNA and McdB; ATP hydrolysis causes McdA release from DNA. Overexpression leads to loss of McdA oscillation, diffuse nucleoid staining by McdA with formation of large carboxysome aggregates that are in regions depleted of McdA; McdA remains nucleoid-associated. Its function is as follows. Mutagenesis studies (characterized in vivo) suggest ATP binding, protein dimerization and a conformational change are necessary for nucleoid DNA-binding and binding to McdB-bound Cbs, which tethers Cbs to the nucleoid. Eventual McdB-stimulated ATP hydrolysis causes de-dimerization of McdA which no longer binds the nucleoid and releases McdB and Cbs. McdB-bound Cbs then move to a region of higher McdA concentration, distributing Cbs across the nucleoid. Incorrect positioning (aggregation) of carboxysomes results in reduced CO(2) fixation by encapsulated ribulose-1,5-bisphosphate carboxylase (RuBisCO, cbbL/cbbS), which leads to slower growth, cell elongation, asymmetric cell division and an increase in RuBisCO levels. The sequence is that of Maintenance of carboxysome distribution protein A from Synechococcus elongatus (strain ATCC 33912 / PCC 7942 / FACHB-805) (Anacystis nidulans R2).